Here is a 397-residue protein sequence, read N- to C-terminus: Presenilin-like protein At2g29900 (397 aa).

Residues 1 to 17 lie on the Cytoplasmic side of the membrane; it reads MDRNQRPRSILDSLGEE. A helical membrane pass occupies residues 18 to 38; that stretch reads LIAILTPVSICMFTVVLLVCI. The Lumenal segment spans residues 39-76; it reads LNSDPSSSSASFSSIATAAYSESDSDSSWDKFVGALLN. A helical membrane pass occupies residues 77-97; it reads SVVFVAAITVATFVLVLLFYL. Residues 98–106 are Cytoplasmic-facing; that stretch reads RCVKFLKFY. Residues 107–127 traverse the membrane as a helical segment; that stretch reads MGFSAFIVLGNLGGEILVLLI. The Lumenal segment spans residues 128-135; sequence DRFRFPID. Residues 136–156 form a helical membrane-spanning segment; the sequence is SITFLILLFNFSVVGVFAVFM. Over 157 to 158 the chain is Cytoplasmic; the sequence is SK. The helical transmembrane segment at 159–179 threads the bilayer; sequence FSILITQGYLVWIGVLVAYFF. Topologically, residues 180–188 are lumenal; sequence TLLPEWTTW. The chain crosses the membrane as a helical span at residues 189 to 209; that stretch reads VLLVALALYDIAAVLLPVGPL. D198 is an active-site residue. Residues 210–305 are Cytoplasmic-facing; that stretch reads RLLVEMAISR…NSETFLEGIG (96 aa). The helical transmembrane segment at 306 to 326 threads the bilayer; the sequence is LGSSGAIKLGLGDFIFYSVLV. The active site involves D318. Over 327–336 the chain is Lumenal; the sequence is GRAAMYDLMT. The helical transmembrane segment at 337 to 357 threads the bilayer; it reads VYACYLAIIAGLGITLMLLSV. The Cytoplasmic portion of the chain corresponds to 358-366; the sequence is YQKALPALP. A PAL motif is present at residues 363-365; the sequence is PAL. The helical intramembrane region spans 367–387; the sequence is VSIMLGVVFYFLARLLLEVFV. Topologically, residues 388 to 397 are cytoplasmic; sequence VQCSSNLVMF.

Belongs to the peptidase A22A family. Homodimer. Probable component of the gamma-secretase complex, a complex composed of a presenilin homodimer, nicastrin, APH1 and PEN2.

It is found in the endoplasmic reticulum membrane. It localises to the golgi apparatus membrane. Probable subunit of the gamma-secretase complex, an endoprotease complex that catalyzes the intramembrane cleavage of integral membrane proteins such as Notch receptors. The chain is Presenilin-like protein At2g29900 from Arabidopsis thaliana (Mouse-ear cress).